The chain runs to 672 residues: Peptidoglycan D,D-transpeptidase MrdA (672 aa).

A helical membrane pass occupies residues 21-41 (IFFAVGLVIICLLVLASRYAY). The active-site Acyl-ester intermediate is the Ser-326. Zn(2+)-binding residues include Asp-350, Asp-365, His-371, and Cys-384. The segment at 616-672 (ANHQVNGGLMTAGIKPGELPSGNESASSTPATSAPTSAAASTPQATPTRPATNEVDE) is disordered. Residues 640–672 (SASSTPATSAPTSAAASTPQATPTRPATNEVDE) are compositionally biased toward low complexity.

It belongs to the transpeptidase family. MrdA subfamily. In terms of assembly, monomer. Zn(2+) serves as cofactor.

It is found in the cell inner membrane. It catalyses the reaction Preferential cleavage: (Ac)2-L-Lys-D-Ala-|-D-Ala. Also transpeptidation of peptidyl-alanyl moieties that are N-acyl substituents of D-alanine.. It functions in the pathway cell wall biogenesis; peptidoglycan biosynthesis. Inhibited by the beta-lactams sulbactam and piperacillin-tazobactam. Its function is as follows. Catalyzes cross-linking of the peptidoglycan cell wall. Involved in the determination of the rod shape of the cell. This Acinetobacter baumannii (strain ATCC 19606 / DSM 30007 / JCM 6841 / CCUG 19606 / CIP 70.34 / NBRC 109757 / NCIMB 12457 / NCTC 12156 / 81) protein is Peptidoglycan D,D-transpeptidase MrdA.